Reading from the N-terminus, the 269-residue chain is Regulatory protein RecX (269 aa).

Belongs to the RecX family.

It localises to the cytoplasm. Functionally, modulates RecA activity. This chain is Regulatory protein RecX, found in Lactococcus lactis subsp. cremoris (strain MG1363).